The following is a 199-amino-acid chain: Recombination protein RecR (199 aa).

The C4-type zinc-finger motif lies at 58 to 73; it reads CRICYNITDTEVCNIC. A Toprim domain is found at 81–176; the sequence is SLICVVSHPM…KVTRIAHGVP (96 aa).

The protein belongs to the RecR family.

In terms of biological role, may play a role in DNA repair. It seems to be involved in an RecBC-independent recombinational process of DNA repair. It may act with RecF and RecO. The protein is Recombination protein RecR of Thermoanaerobacter sp. (strain X514).